Consider the following 300-residue polypeptide: Cation-efflux pump FieF (300 aa).

Transmembrane regions (helical) follow at residues 12–32 (AAIAATAMASLLLLIKIFAWW), 39–59 (ILAALVDSLVDIGASLTNLLV), 82–102 (AALAQSMFISGSALFLFLTGI), and 114–134 (PGVGVIVTIVALICTIILVSF). The Zn(2+) site is built by D45 and D49. Residues H153 and D157 each coordinate Zn(2+). A run of 2 helical transmembrane segments spans residues 156-176 (SDVMMNGAILLALGLSWYGWH) and 178-198 (ADALFALGIGIYILYSALRMG).

The protein belongs to the cation diffusion facilitator (CDF) transporter (TC 2.A.4) family. FieF subfamily. As to quaternary structure, homodimer.

The protein localises to the cell inner membrane. It catalyses the reaction Zn(2+)(in) + H(+)(out) = Zn(2+)(out) + H(+)(in). It carries out the reaction Cd(2+)(in) + H(+)(out) = Cd(2+)(out) + H(+)(in). The catalysed reaction is Fe(2+)(in) + H(+)(out) = Fe(2+)(out) + H(+)(in). Its function is as follows. Divalent metal cation transporter which exports Zn(2+), Cd(2+) and possibly Fe(2+). May be involved in zinc and iron detoxification by efflux. The protein is Cation-efflux pump FieF of Escherichia coli O127:H6 (strain E2348/69 / EPEC).